The following is a 453-amino-acid chain: Succinate-semialdehyde dehydrogenase (acetylating) (453 aa).

188 to 193 (ATGGAG) lines the NADP(+) pocket. Cys-242 is an active-site residue.

Homodimer.

The enzyme catalyses succinate semialdehyde + NADP(+) + CoA = succinyl-CoA + NADPH + H(+). Functionally, catalyzes the reduction of succinate semialdehyde to succinyl-CoA. The enzyme is specific for succinate semialdehyde and succinyl-CoA, and only shows low activity with palmitoyl-CoA. There is no activity with NAD(+) as cosubstrate. This chain is Succinate-semialdehyde dehydrogenase (acetylating) (sucD), found in Clostridium kluyveri (strain ATCC 8527 / DSM 555 / NBRC 12016 / NCIMB 10680 / K1).